Here is a 297-residue protein sequence, read N- to C-terminus: 4-hydroxy-tetrahydrodipicolinate synthase (297 aa).

Threonine 55 provides a ligand contact to pyruvate. Tyrosine 144 functions as the Proton donor/acceptor in the catalytic mechanism. Catalysis depends on lysine 172, which acts as the Schiff-base intermediate with substrate. Isoleucine 213 is a binding site for pyruvate.

It belongs to the DapA family. Homotetramer; dimer of dimers.

It localises to the cytoplasm. The catalysed reaction is L-aspartate 4-semialdehyde + pyruvate = (2S,4S)-4-hydroxy-2,3,4,5-tetrahydrodipicolinate + H2O + H(+). The protein operates within amino-acid biosynthesis; L-lysine biosynthesis via DAP pathway; (S)-tetrahydrodipicolinate from L-aspartate: step 3/4. Catalyzes the condensation of (S)-aspartate-beta-semialdehyde [(S)-ASA] and pyruvate to 4-hydroxy-tetrahydrodipicolinate (HTPA). This chain is 4-hydroxy-tetrahydrodipicolinate synthase, found in Lactococcus lactis subsp. lactis (strain IL1403) (Streptococcus lactis).